The following is a 315-amino-acid chain: Ankyrin repeat domain-containing protein EMB506, chloroplastic (315 aa).

A chloroplast-targeting transit peptide spans 1–39 (MVSSVLSIPPQTCLLPRLPISDSVNCKSKIVYCLSTSVR). The segment covering 44 to 65 (KRQSTARTRSFTETNRRTPSVQ) has biased composition (polar residues). The disordered stretch occupies residues 44–106 (KRQSTARTRS…DNESDWEDDS (63 aa)). Positions 72–104 (EDPDDGSDSENEYEGEEEDGIGNDLDNESDWED) are enriched in acidic residues. 5 ANK repeats span residues 151–180 (KSWK…DIDD), 184–213 (DNQT…NPHL), 217–246 (DGAA…DVNV), 250–279 (EGWT…DKTR), and 283–307 (DGKL…VKLL).

In terms of assembly, interacts with AKR. No homodimerization observed. As to expression, expressed in roots, inflorescence stems, flowers, siliques, dry seeds and mature cauline leaves.

The protein resides in the plastid. Its subcellular location is the chloroplast. Functionally, involved in the initial differentiation of the proplastid during the embryo development. Also required for correct cotyledon, true leaf and cauline leaf margin development. The protein is Ankyrin repeat domain-containing protein EMB506, chloroplastic (EMB506) of Arabidopsis thaliana (Mouse-ear cress).